The primary structure comprises 268 residues: Undecaprenyl-diphosphatase 1 (268 aa).

7 helical membrane passes run 5-25 (TIVE…IPVS), 43-63 (GKAF…SVYF), 81-101 (HFVI…ALAH), 107-127 (VLFE…VILL), 185-205 (AEFS…FDLF), 214-234 (ADLP…LFVV), and 248-268 (LFGW…MIWG).

This sequence belongs to the UppP family.

Its subcellular location is the cell inner membrane. The enzyme catalyses di-trans,octa-cis-undecaprenyl diphosphate + H2O = di-trans,octa-cis-undecaprenyl phosphate + phosphate + H(+). Functionally, catalyzes the dephosphorylation of undecaprenyl diphosphate (UPP). Confers resistance to bacitracin. In Mesorhizobium japonicum (strain LMG 29417 / CECT 9101 / MAFF 303099) (Mesorhizobium loti (strain MAFF 303099)), this protein is Undecaprenyl-diphosphatase 1.